The sequence spans 474 residues: Probable protein phosphatase 2C 37 (474 aa).

A disordered region spans residues Met1–Ala90. Residues Leu57–Cys77 show a composition bias toward low complexity. A PPM-type phosphatase domain is found at Ala113–Leu470. 3 residues coordinate Mn(2+): Asp152, Gly153, and Asp387. The disordered stretch occupies residues Leu406–Ala434. Residues Ser420–Ala434 are compositionally biased toward low complexity. Asp461 serves as a coordination point for Mn(2+).

The protein belongs to the PP2C family. Mg(2+) serves as cofactor. It depends on Mn(2+) as a cofactor.

It carries out the reaction O-phospho-L-seryl-[protein] + H2O = L-seryl-[protein] + phosphate. The enzyme catalyses O-phospho-L-threonyl-[protein] + H2O = L-threonyl-[protein] + phosphate. This is Probable protein phosphatase 2C 37 from Oryza sativa subsp. japonica (Rice).